The primary structure comprises 396 residues: ATP synthase subunit beta, chloroplastic (396 aa).

74–81 (GGAGVGKT) lines the ATP pocket.

This sequence belongs to the ATPase alpha/beta chains family. In terms of assembly, F-type ATPases have 2 components, CF(1) - the catalytic core - and CF(0) - the membrane proton channel. CF(1) has five subunits: alpha(3), beta(3), gamma(1), delta(1), epsilon(1). CF(0) has four main subunits: a(1), b(1), b'(1) and c(9-12).

It is found in the plastid. The protein localises to the chloroplast thylakoid membrane. The enzyme catalyses ATP + H2O + 4 H(+)(in) = ADP + phosphate + 5 H(+)(out). Functionally, produces ATP from ADP in the presence of a proton gradient across the membrane. The catalytic sites are hosted primarily by the beta subunits. The chain is ATP synthase subunit beta, chloroplastic from Adiantum raddianum (Maidenhair fern).